We begin with the raw amino-acid sequence, 525 residues long: DEAD-box ATP-dependent RNA helicase CshA (525 aa).

The Q motif motif lies at Thr-2 to Ala-30. A Helicase ATP-binding domain is found at Ile-33–Ile-203. Ala-46–Thr-53 provides a ligand contact to ATP. The DEAD box signature appears at Asp-151–Asp-154. One can recognise a Helicase C-terminal domain in the interval Asn-214–Ala-374. A disordered region spans residues Thr-428–Ala-525. Residues Asp-458–Gly-503 are compositionally biased toward basic and acidic residues. Basic residues predominate over residues Glu-515–Ala-525.

This sequence belongs to the DEAD box helicase family. CshA subfamily. In terms of assembly, oligomerizes, may be a member of the RNA degradosome.

It localises to the cytoplasm. The enzyme catalyses ATP + H2O = ADP + phosphate + H(+). Functionally, DEAD-box RNA helicase possibly involved in RNA degradation. Unwinds dsRNA in both 5'- and 3'-directions, has RNA-dependent ATPase activity. The protein is DEAD-box ATP-dependent RNA helicase CshA of Bacillus cereus (strain ATCC 10987 / NRS 248).